The following is a 655-amino-acid chain: Sphingomyelin phosphodiesterase 3 (655 aa).

The Cytoplasmic portion of the chain corresponds to 1 to 10 (MVLYTTPFPN). Residues 11–31 (SCLSALHAVSWALIFPCYWLV) constitute an intramembrane region (helical). At 32–64 (DRLLASFIPTTYEKRQRADDPCCLQLFCTVLFT) the chain is on the cytoplasmic side. Residues C53, C54, and C59 are each lipidated (S-palmitoyl cysteine). The segment at residues 65-85 (PVYLALLVAALPFAFLGFIFW) is an intramembrane region (helical). The Cytoplasmic portion of the chain corresponds to 86 to 655 (SPLQSARRPY…LMVSAGEEEA (570 aa)). Residue S178 is modified to Phosphoserine. The disordered stretch occupies residues 209–318 (VEYKGDGGRH…SGGSGEPGAN (110 aa)). Basic and acidic residues-rich tracts occupy residues 211 to 221 (YKGDGGRHPSD) and 246 to 255 (GGEEGGRPQE). The residue at position 289 (S289) is a Phosphoserine. Residue E362 participates in Mg(2+) binding. Residues C395 and C396 are each lipidated (S-palmitoyl cysteine). Catalysis depends on H639, which acts as the Proton acceptor.

Belongs to the neutral sphingomyelinase family. It depends on Mg(2+) as a cofactor. Palmitoylated, palmitoylation-deficient proteins are targeted for lysosomal degradation. In terms of tissue distribution, predominantly expressed in brain (at protein level).

It is found in the golgi apparatus membrane. It localises to the cell membrane. It catalyses the reaction a sphingomyelin + H2O = phosphocholine + an N-acylsphing-4-enine + H(+). The enzyme catalyses N-(15Z-tetracosenoyl)sphing-4-enine-1-phosphocholine + H2O = N-(15Z-tetracosenoyl)-sphing-4-enine + phosphocholine + H(+). It carries out the reaction N-(tetracosanoyl)-sphing-4-enine-1-phosphocholine + H2O = N-tetracosanoyl-sphing-4-enine + phosphocholine + H(+). The catalysed reaction is N-(hexadecanoyl)-sphing-4-enine-1-phosphocholine + H2O = N-hexadecanoylsphing-4-enine + phosphocholine + H(+). It catalyses the reaction an N-(acyl)-sphingosylphosphocholine + H2O = an N-acyl-sphingoid base + phosphocholine + H(+). The enzyme catalyses 1-hexadecanoyl-sn-glycero-3-phosphocholine + H2O = 1-hexadecanoyl-sn-glycerol + phosphocholine + H(+). It carries out the reaction 1-O-octadecyl-sn-glycero-3-phosphocholine + H2O = 1-O-octadecyl-sn-glycerol + phosphocholine + H(+). The catalysed reaction is a sphingosylphosphocholine + H2O = a sphingoid base + phosphocholine + H(+). The protein operates within lipid metabolism; sphingolipid metabolism. Its activity is regulated as follows. Inhibited by nSMase inhibitor GW4869. Binding of anionic phospholipids (APLs) such as phosphatidylserine (PS) and phosphatidic acid (PA) increases enzymatic activity. Its function is as follows. Catalyzes the hydrolysis of sphingomyelin to form ceramide and phosphocholine. Ceramide mediates numerous cellular functions, such as apoptosis and growth arrest, and is capable of regulating these 2 cellular events independently. Also hydrolyzes sphingosylphosphocholine. Regulates the cell cycle by acting as a growth suppressor in confluent cells. Probably acts as a regulator of postnatal development and participates in bone and dentin mineralization. Binds to anionic phospholipids (APLs) such as phosphatidylserine (PS) and phosphatidic acid (PA) that modulate enzymatic activity and subcellular location. May be involved in IL-1-beta-induced JNK activation in hepatocytes. May act as a mediator in transcriptional regulation of NOS2/iNOS via the NF-kappa-B activation under inflammatory conditions. This chain is Sphingomyelin phosphodiesterase 3, found in Mus musculus (Mouse).